We begin with the raw amino-acid sequence, 195 residues long: Orotate phosphoribosyltransferase (195 aa).

5-phospho-alpha-D-ribose 1-diphosphate contacts are provided by residues Arg86, Lys90, His92, and 111-119; that span reads DDVATTGVS. Thr115 and Arg143 together coordinate orotate.

It belongs to the purine/pyrimidine phosphoribosyltransferase family. PyrE subfamily. Homodimer. Mg(2+) serves as cofactor.

The enzyme catalyses orotidine 5'-phosphate + diphosphate = orotate + 5-phospho-alpha-D-ribose 1-diphosphate. Its pathway is pyrimidine metabolism; UMP biosynthesis via de novo pathway; UMP from orotate: step 1/2. Catalyzes the transfer of a ribosyl phosphate group from 5-phosphoribose 1-diphosphate to orotate, leading to the formation of orotidine monophosphate (OMP). This is Orotate phosphoribosyltransferase from Saccharolobus solfataricus (strain ATCC 35092 / DSM 1617 / JCM 11322 / P2) (Sulfolobus solfataricus).